Here is a 362-residue protein sequence, read N- to C-terminus: MAQIFNFSSGPAMLPAEVLKQAQQELRDWNGLGTSVMEVSHRGKEFIQVAEEAEKDFRDLLNVPSNYKVLFCHGGGRGQFAAVPLNILGDKTTADYVDAGYWAASAIKEAKKYCTPNVFDAKVTVDGLRAVKPMREWQLSDNAAYMHYCPNETIDGIAIDETPDFGKDVVVAADFSSTILSRPIDVSRYGVIYAGAQKNIGPAGLTIVIVREDLLGKANIACPSILDYSILNDNGSMFNTPPTFAWYLSGLVFKWLKANGGVAEMDKINQQKAELLYGVIDNSDFYRNDVAKANRSRMNVPFQLADSALDKLFLEESFAAGLHALKGHRVVGGMRASIYNAMPLEGVKALTDFMVEFERRHG.

L-glutamate contacts are provided by S9 and R42. Pyridoxal 5'-phosphate contacts are provided by residues 76–77 (GR), W102, T153, D174, and Q197. At K198 the chain carries N6-(pyridoxal phosphate)lysine. 239–240 (NT) contributes to the pyridoxal 5'-phosphate binding site.

This sequence belongs to the class-V pyridoxal-phosphate-dependent aminotransferase family. SerC subfamily. Homodimer. Requires pyridoxal 5'-phosphate as cofactor.

The protein localises to the cytoplasm. The enzyme catalyses O-phospho-L-serine + 2-oxoglutarate = 3-phosphooxypyruvate + L-glutamate. The catalysed reaction is 4-(phosphooxy)-L-threonine + 2-oxoglutarate = (R)-3-hydroxy-2-oxo-4-phosphooxybutanoate + L-glutamate. The protein operates within amino-acid biosynthesis; L-serine biosynthesis; L-serine from 3-phospho-D-glycerate: step 2/3. It functions in the pathway cofactor biosynthesis; pyridoxine 5'-phosphate biosynthesis; pyridoxine 5'-phosphate from D-erythrose 4-phosphate: step 3/5. Functionally, catalyzes the reversible conversion of 3-phosphohydroxypyruvate to phosphoserine and of 3-hydroxy-2-oxo-4-phosphonooxybutanoate to phosphohydroxythreonine. The protein is Phosphoserine aminotransferase of Escherichia coli (strain ATCC 8739 / DSM 1576 / NBRC 3972 / NCIMB 8545 / WDCM 00012 / Crooks).